The chain runs to 306 residues: Elongation factor Ts (306 aa).

The tract at residues 80–83 is involved in Mg(2+) ion dislocation from EF-Tu; it reads TDFV.

It belongs to the EF-Ts family.

Its subcellular location is the cytoplasm. Associates with the EF-Tu.GDP complex and induces the exchange of GDP to GTP. It remains bound to the aminoacyl-tRNA.EF-Tu.GTP complex up to the GTP hydrolysis stage on the ribosome. In Methylorubrum populi (strain ATCC BAA-705 / NCIMB 13946 / BJ001) (Methylobacterium populi), this protein is Elongation factor Ts.